A 343-amino-acid polypeptide reads, in one-letter code: Heat-inducible transcription repressor HrcA (343 aa).

This sequence belongs to the HrcA family.

Negative regulator of class I heat shock genes (grpE-dnaK-dnaJ and groELS operons). Prevents heat-shock induction of these operons. This is Heat-inducible transcription repressor HrcA from Halalkalibacterium halodurans (strain ATCC BAA-125 / DSM 18197 / FERM 7344 / JCM 9153 / C-125) (Bacillus halodurans).